Here is a 362-residue protein sequence, read N- to C-terminus: Phosphoserine aminotransferase (362 aa).

Residues S9 and R42 each contribute to the L-glutamate site. Residues 76–77, W102, T153, D174, and Q197 each bind pyridoxal 5'-phosphate; that span reads GR. The residue at position 198 (K198) is an N6-(pyridoxal phosphate)lysine. 239–240 is a binding site for pyridoxal 5'-phosphate; that stretch reads NT.

This sequence belongs to the class-V pyridoxal-phosphate-dependent aminotransferase family. SerC subfamily. As to quaternary structure, homodimer. Pyridoxal 5'-phosphate is required as a cofactor.

Its subcellular location is the cytoplasm. The enzyme catalyses O-phospho-L-serine + 2-oxoglutarate = 3-phosphooxypyruvate + L-glutamate. It carries out the reaction 4-(phosphooxy)-L-threonine + 2-oxoglutarate = (R)-3-hydroxy-2-oxo-4-phosphooxybutanoate + L-glutamate. Its pathway is amino-acid biosynthesis; L-serine biosynthesis; L-serine from 3-phospho-D-glycerate: step 2/3. It functions in the pathway cofactor biosynthesis; pyridoxine 5'-phosphate biosynthesis; pyridoxine 5'-phosphate from D-erythrose 4-phosphate: step 3/5. Its function is as follows. Catalyzes the reversible conversion of 3-phosphohydroxypyruvate to phosphoserine and of 3-hydroxy-2-oxo-4-phosphonooxybutanoate to phosphohydroxythreonine. This is Phosphoserine aminotransferase from Escherichia coli (strain ATCC 8739 / DSM 1576 / NBRC 3972 / NCIMB 8545 / WDCM 00012 / Crooks).